A 224-amino-acid polypeptide reads, in one-letter code: Ribose-5-phosphate isomerase A (224 aa).

Substrate is bound by residues 26-29, 82-85, and 95-98; these read TGST, DGAD, and KGGG. The active-site Proton acceptor is glutamate 104. Position 122 (lysine 122) interacts with substrate.

The protein belongs to the ribose 5-phosphate isomerase family. In terms of assembly, homodimer.

The enzyme catalyses aldehydo-D-ribose 5-phosphate = D-ribulose 5-phosphate. The protein operates within carbohydrate degradation; pentose phosphate pathway; D-ribose 5-phosphate from D-ribulose 5-phosphate (non-oxidative stage): step 1/1. Functionally, catalyzes the reversible conversion of ribose-5-phosphate to ribulose 5-phosphate. In Streptococcus suis (strain 98HAH33), this protein is Ribose-5-phosphate isomerase A.